Here is a 505-residue protein sequence, read N- to C-terminus: MCPSFLVTLLLLQLSSLVVVLVVWAEQLPEFNVRRDDFPSNFVFGAGTSALQVEGAIAEDGKTPNIWDVDSHMGHMPDKSTTDIACDSYHRYKEDVKIMSDIGLEAYRFSIAWTRILPYGRGFINPKGVEYYNNLIDTLLEHGIQPHATIYHIDHPQILEDEYGGWLSPRMIEDFTTYADVCFREFGDRVSHWTTINEPNIISLGAYDSGQIPPHRCTPPGAYNCTAGNSSVEPYKAMHHFLLAHASAVQIYRTKYQAKQKGLIGLNVYGFWCAPQTNSRADIEATKRATAFYTGWAADPLVFGDYPIIMKENVGSRLPSFTKNESELVKGSFDFIGLNHYFVFYIQDDPEEITTPISLRNFDSDMRVKASVKPGDSGDPSGLKNLLRYFKDNYGNPPVYVHENGFGSPQNETLDDDMGRIRYISGYIGSMLEAIKNGSDTRGYFVWSFMDAFEILSGYQTRYGIVHVDFDDKSLKRQLKPSAQWYSNFIKKKNTTEDEISYSSQ.

Positions 1-25 (MCPSFLVTLLLLQLSSLVVVLVVWA) are cleaved as a signal peptide. Residues Q52, H152, and 197–198 (NE) each bind a beta-D-glucoside. The Proton donor role is filled by E198. The cysteines at positions 217 and 225 are disulfide-linked. Residues N224, N229, and N324 are each glycosylated (N-linked (GlcNAc...) asparagine). A beta-D-glucoside contacts are provided by Y341 and E403. The active-site Nucleophile is the E403. N411 and N437 each carry an N-linked (GlcNAc...) asparagine glycan. Residues W447 and Y463 each contribute to the a beta-D-glucoside site. Residue N494 is glycosylated (N-linked (GlcNAc...) asparagine).

Belongs to the glycosyl hydrolase 1 family.

It localises to the vacuole. The catalysed reaction is 1-O-(4-hydroxy-3-methoxybenzoyl)-beta-D-glucose + cyanidin 3-O-beta-D-glucoside = cyanidin 3,7-di-O-beta-D-glucoside + vanillate. It participates in pigment biosynthesis; anthocyanin biosynthesis. In terms of biological role, beta-glycosidase that catalyzes the transfer of glucose moiety to anthocyanidin 3-glucoside at the 7 position. Anthocyanins are ubiquitous colored pigments that are responsible for variations in petal color. This Delphinium grandiflorum (Siberian larkspur) protein is Cyanidin 3-O-glucoside 7-O-glucosyltransferase (acyl-glucose) (AA7GT).